Consider the following 192-residue polypeptide: Erythropoietin (192 aa).

The first 26 residues, 1–26 (MGVPERPTLLLLLSLLLIPLGLPVLC), serve as a signal peptide directing secretion. An intrachain disulfide couples cysteine 33 to cysteine 187. 3 N-linked (GlcNAc...) asparagine glycosylation sites follow: asparagine 50, asparagine 64, and asparagine 109.

This sequence belongs to the EPO/TPO family. In terms of tissue distribution, produced by kidney or liver of adult mammals and by liver of fetal or neonatal mammals.

The protein localises to the secreted. In terms of biological role, hormone involved in the regulation of erythrocyte proliferation and differentiation and the maintenance of a physiological level of circulating erythrocyte mass. Binds to EPOR leading to EPOR dimerization and JAK2 activation thereby activating specific downstream effectors, including STAT1 and STAT3. The chain is Erythropoietin (Epo) from Mus musculus (Mouse).